Consider the following 814-residue polypeptide: Rho GTPase-activating protein 44 (814 aa).

A BAR domain is found at 14-249 (QTVGRAEKTE…IKAQQEAWVE (236 aa)). Positions 255 to 445 (KPLEEHLMIS…PIIQHADWFF (191 aa)) constitute a Rho-GAP domain. 3 disordered regions span residues 467–493 (ANYSSMPSPDMDPADRRQPEQARRPLS), 528–769 (RGSS…MSTD), and 784–814 (STLRLSPLEHARRHSATDKRDSEEESESTAL). A compositionally biased stretch (basic and acidic residues) spans 479–489 (PADRRQPEQAR). Ser493 carries the post-translational modification Phosphoserine. Low complexity-rich tracts occupy residues 567-581 (SPATPAPALSPSGAS), 598-612 (SPGSGQKGSPGSIQG), 622-637 (PQPAASPSQLPADQSP), 684-704 (SPYGLSYPPGYSMASGQLSPA), and 741-752 (SVSLSASSPQST). The tract at residues 727–814 (KPRQRPTLPP…SEEESESTAL (88 aa)) is interaction with BST2. Basic and acidic residues predominate over residues 790-805 (PLEHARRHSATDKRDS). Ser805 carries the post-translational modification Phosphoserine. The short motif at 811 to 814 (STAL) is the PDZ-binding element.

In terms of assembly, interacts with BST2 (via cytoplasmic domain). Interacts (probably via PDZ-binding motif) with SHANK3 (via PDZ domain); the interaction takes place in dendritic spines and promotes GRIA1 exocytosis. Specifically expressed in brain (at protein level). Detected in olfactory bulb, cortex, hippocampus, diencephalon and cerebellum (at protein level). Expressed in hippocampal neurons (at protein level).

Its subcellular location is the cell projection. It localises to the dendritic spine. It is found in the recycling endosome. The protein resides in the presynapse. The protein localises to the dendrite. Functionally, GTPase-activating protein (GAP) that stimulates the GTPase activity of Rho-type GTPases. Thereby, controls Rho-type GTPases cycling between their active GTP-bound and inactive GDP-bound states. Acts as a GAP at least for CDC42 and RAC1. In neurons, is involved in dendritic spine formation and synaptic plasticity in a specific RAC1-GAP activity. Limits the initiation of exploratory dendritic filopodia. Recruited to actin-patches that seed filopodia, binds specifically to plasma membrane sections that are deformed inward by acto-myosin mediated contractile forces. Acts through GAP activity on RAC1 to reduce actin polymerization necessary for filopodia formation. In association with SHANK3, promotes GRIA1 exocytosis from recycling endosomes and spine morphological changes associated to long-term potentiation. The chain is Rho GTPase-activating protein 44 from Mus musculus (Mouse).